Here is a 443-residue protein sequence, read N- to C-terminus: MPSRVEDYEVLHSIGTGSYGRCQKIRRKSDGKILVWKELDYGSMTEVEKQMLVSEVNLLRELKHPNIVSYYDRIIDRTNTTLYIVMEYCEGGDLASVISKGTKDRQYLEEEFVLRVMTQLTLALKECHRRSDGGHTVLHRDLKPANVFLDSKHNVKLGDFGLARILNHDTSFAKTFVGTPYYMSPEQMSCLSYNEKSDIWSLGCLLYELCALMPPFTAFNQKELAGKIREGRFRRIPYRYSDGLNDLITRMLNLKDYHRPSVEEILESPLIADLVAEEQRRNLERRGRRSGEPSKLPDSSPVLSELKLKERQLQDREQALRAREDILEQKERELCIRERLAEDKLARAESLMKNYSLLKEHRLLCLAGGPELDLPSSAMKKKVHFHGESKENTARSENSESYLAKSKCRDLKKRLHAAQLRAQALADIEKNYQLKSRQILGMR.

Residues 8-271 (YEVLHSIGTG…VEEILESPLI (264 aa)) form the Protein kinase domain. Residues 14–22 (IGTGSYGRC) and lysine 37 each bind ATP. Aspartate 141 acts as the Proton acceptor in catalysis. The residue at position 170 (threonine 170) is a Phosphothreonine; by autocatalysis. The residue at position 171 (serine 171) is a Phosphoserine; by autocatalysis. Threonine 175 and threonine 179 each carry phosphothreonine; by autocatalysis. Serine 184 is subject to Phosphoserine. Position 241 is a phosphoserine; by autocatalysis (serine 241). The interval 264-443 (EILESPLIAD…LKSRQILGMR (180 aa)) is interaction with PCNT. Positions 282 to 292 (NLERRGRRSGE) are enriched in basic and acidic residues. The tract at residues 282–303 (NLERRGRRSGEPSKLPDSSPVL) is disordered. Serine 300 is modified (phosphoserine). Residues 301–443 (PVLSELKLKE…LKSRQILGMR (143 aa)) are interaction with CEP85. The stretch at 303–361 (LSELKLKERQLQDREQALRAREDILEQKERELCIRERLAEDKLARAESLMKNYSLLKEH) forms a coiled coil. Residues 306-334 (LKLKERQLQDREQALRAREDILEQKEREL) form a leucine-zipper region. The segment at 329–443 (QKERELCIRE…LKSRQILGMR (115 aa)) is necessary for interaction with MAD1L1. The segment at 333-370 (ELCIRERLAEDKLARAESLMKNYSLLKEHRLLCLAGGP) is required for microtubule binding and for localization to the centrosomes. A Phosphoserine; by STK3/MST2 modification is found at serine 356. Residues 383–402 (VHFHGESKENTARSENSESY) form a disordered region. Basic and acidic residues predominate over residues 385–398 (FHGESKENTARSEN). Serine 389, serine 396, and serine 401 each carry phosphoserine. The interaction with SAV1 and STK3/MST2 stretch occupies residues 402–437 (YLAKSKCRDLKKRLHAAQLRAQALADIEKNYQLKSR). The stretch at 403 to 427 (LAKSKCRDLKKRLHAAQLRAQALAD) forms a coiled coil. Position 436 is a phosphoserine; by STK3/MST2 (serine 436).

The protein belongs to the protein kinase superfamily. NEK Ser/Thr protein kinase family. NIMA subfamily. In terms of assembly, forms homodimers and heterodimers. Interacts with CDC20, CTNB1, MAD1L1, MAD2L1, MAPK, NEK11, NPM1, NDC80, PCNT, PPP1CA, PPP1CC and SGO1. Interacts with STK3/MST2 (via SARAH domain) and SAV1 (via SARAH domain). Interacts with NECAB3 and HMGA2. Interacts with CEP68; the interaction leads to phosphorylation of CEP68. Interacts with CNTLN; the interaction leads to phosphorylation of CNTLN. Interacts with CEP85. Requires Mg(2+) as cofactor. Post-translationally, activated by autophosphorylation. Protein phosphatase 1 represses autophosphorylation and activation of isoform 1 by dephosphorylation. Phosphorylation by STK3/MST2 is necessary for its localization to the centrosome. Most abundantly expressed in testis. Low levels found in mid-gestation embryo, ovary, placenta, intestine, thymus and skin. Within the testis, expression restricted to germ cells with highest levels detected in spermatocytes at pachytene and diplotene stages. Also expressed in meiotic pachytene oocytes.

It localises to the nucleus. The protein resides in the nucleolus. Its subcellular location is the cytoplasm. It is found in the cytoskeleton. The protein localises to the microtubule organizing center. It localises to the centrosome. The protein resides in the spindle pole. Its subcellular location is the chromosome. It is found in the centromere. The protein localises to the kinetochore. It carries out the reaction L-seryl-[protein] + ATP = O-phospho-L-seryl-[protein] + ADP + H(+). The catalysed reaction is L-threonyl-[protein] + ATP = O-phospho-L-threonyl-[protein] + ADP + H(+). Its catalytic activity is inhibited by the inhibitor CCT241950. In the presence of this inhibitor, displays an autoinhibited conformation: Tyr-70 side chain points into the active site, interacts with the activation loop, and blocks the alphaC helix. Functionally, protein kinase which is involved in the control of centrosome separation and bipolar spindle formation in mitotic cells and chromatin condensation in meiotic cells. Regulates centrosome separation (essential for the formation of bipolar spindles and high-fidelity chromosome separation) by phosphorylating centrosomal proteins such as CROCC, CEP250 and NINL, resulting in their displacement from the centrosomes. Regulates kinetochore microtubule attachment stability in mitosis via phosphorylation of NDC80. Involved in regulation of mitotic checkpoint protein complex via phosphorylation of CDC20 and MAD2L1. Plays an active role in chromatin condensation during the first meiotic division through phosphorylation of HMGA2. Phosphorylates: PPP1CC; SGO1; NECAB3 and NPM1. Essential for localization of MAD2L1 to kinetochore and MAPK1 and NPM1 to the centrosome. Phosphorylates CEP68 and CNTLN directly or indirectly. NEK2-mediated phosphorylation of CEP68 promotes CEP68 dissociation from the centrosome and its degradation at the onset of mitosis. Phosphorylates and activates NEK11 in G1/S-arrested cells. Involved in the regulation of centrosome disjunction. This is Serine/threonine-protein kinase Nek2 (Nek2) from Mus musculus (Mouse).